Consider the following 92-residue polypeptide: Elongation factor 1-beta (92 aa).

This sequence belongs to the EF-1-beta/EF-1-delta family.

Its function is as follows. Promotes the exchange of GDP for GTP in EF-1-alpha/GDP, thus allowing the regeneration of EF-1-alpha/GTP that could then be used to form the ternary complex EF-1-alpha/GTP/AAtRNA. This Pyrobaculum calidifontis (strain DSM 21063 / JCM 11548 / VA1) protein is Elongation factor 1-beta.